A 374-amino-acid polypeptide reads, in one-letter code: Chaperone protein DnaJ (374 aa).

A J domain is found at 4-68 (DYYEILGVSR…ETRNRYDRFG (65 aa)). Residues 133-215 (GGEKEIRIRH…CGGSGRRQET (83 aa)) form a CR-type zinc finger. 8 residues coordinate Zn(2+): C146, C149, C163, C166, C189, C192, C203, and C206. CXXCXGXG motif repeat units lie at residues 146–153 (CQTCKGSG), 163–170 (CTTCSGTG), 189–196 (CPTCDGAG), and 203–210 (CDVCGGSG).

The protein belongs to the DnaJ family. In terms of assembly, homodimer. Zn(2+) is required as a cofactor.

The protein localises to the cytoplasm. Participates actively in the response to hyperosmotic and heat shock by preventing the aggregation of stress-denatured proteins and by disaggregating proteins, also in an autonomous, DnaK-independent fashion. Unfolded proteins bind initially to DnaJ; upon interaction with the DnaJ-bound protein, DnaK hydrolyzes its bound ATP, resulting in the formation of a stable complex. GrpE releases ADP from DnaK; ATP binding to DnaK triggers the release of the substrate protein, thus completing the reaction cycle. Several rounds of ATP-dependent interactions between DnaJ, DnaK and GrpE are required for fully efficient folding. Also involved, together with DnaK and GrpE, in the DNA replication of plasmids through activation of initiation proteins. The protein is Chaperone protein DnaJ of Microcystis aeruginosa (strain NIES-843 / IAM M-2473).